The following is a 66-amino-acid chain: Large ribosomal subunit protein bL33c (66 aa).

This sequence belongs to the bacterial ribosomal protein bL33 family.

Its subcellular location is the plastid. The protein localises to the chloroplast. The sequence is that of Large ribosomal subunit protein bL33c from Agrostis stolonifera (Creeping bentgrass).